The following is a 530-amino-acid chain: Calcium uptake protein 3, mitochondrial (530 aa).

A mitochondrion-targeting transit peptide spans 1–43; the sequence is MAALRRLLWPPPRVSPPLCAHQPLLGPWGRPAVTTLGLPGRPF. The tract at residues 92–115 is disordered; it reads GSPATGRPSKSAATEPEDPPRGRG. Positions 232 to 267 constitute an EF-hand 1 domain; it reads KPHAGFRIAFNMFDTDGNEMVDKKEFLVLQEIFRKK. The Ca(2+) site is built by D245, D247, N249, M251, D253, and E256. Residues 401 to 436 enclose the EF-hand 2; degenerate domain; sequence VENTSVFLENVRYSIPEEKGITFDEFRSFFQFLNNL. The 36-residue stretch at 470-505 folds into the EF-hand 3 domain; sequence FSPHLVNTVFKIFDVDKDDQLSYKEFIGIMKDRLHR. 5 residues coordinate Ca(2+): D483, D485, D487, Q489, and E494.

This sequence belongs to the MICU1 family. MICU3 subfamily. In terms of assembly, heterodimer; disulfide-linked; heterodimerizes with MICU1. Component of the uniplex complex, composed of MCU, EMRE/SMDT1, MICU1 and MICU3 in a 4:4:1:1 stoichiometry. Specifically expressed in the central nervous system and skeletal muscle.

It localises to the mitochondrion intermembrane space. The protein localises to the mitochondrion inner membrane. Its function is as follows. Tissue-specific calcium sensor of the mitochondrial calcium uniporter (MCU) channel, which specifically regulates MCU channel activity in the central nervous system and skeletal muscle. Senses calcium level via its EF-hand domains: compared to MICU1 and MICU2, MICU3 has a higher affinity for calcium. MICU1 and MICU3 form a disulfide-linked heterodimer that stimulates and inhibits MCU activity, depending on the concentration of calcium. At low calcium levels, MICU1 occludes the pore of the MCU channel, preventing mitochondrial calcium uptake. At higher calcium levels, calcium-binding to MICU1 and MICU3 induces a conformational change that weakens MCU-MICU1 interactions and moves the MICU1-MICU3 heterodimer away from the pore, allowing calcium permeation through the MCU channel. The high calcium affinity of MICU3 lowers the calcium threshold necessary for calcium permeation through the MCU channel. The MICU1-MICU3 heterodimer promotes flexibility of neurotransmission in neuronal cells by enhancing mitochondrial calcium uptake in presynapses. It is also required to increase mitochondrial calcium uptake in skeletal muscle cells, thereby increasing ATP production. This chain is Calcium uptake protein 3, mitochondrial, found in Homo sapiens (Human).